The primary structure comprises 439 residues: Innexin-19 (439 aa).

The next 4 membrane-spanning stretches (helical) occupy residues 33 to 53 (PLILAVCCLVISAKQYGGTPI), 103 to 123 (QWVPFILIAEALMFSLPCIFW), 199 to 219 (IVYSFTKLLYSVNVVAQFFIL), and 285 to 305 (VFAFLWCWYMILAIITTCSFI).

This sequence belongs to the pannexin family.

The protein localises to the cell membrane. It is found in the cell junction. It localises to the gap junction. Functionally, structural component of the gap junctions that specifically coordinates left-right asymmetry in the developing nervous system. Acts by forming gap junction network linking embryonic neurons and providing electrical coupling between cells, leading to promote or inhibit AWC signaling. This Caenorhabditis briggsae protein is Innexin-19 (inx-19).